The primary structure comprises 79 residues: MSRLGIMVLTLLLLVFIVTSHQDAGEKQATQRAAINFRWKRSLTRRTATEECEEYCEDEEKTCCGEEDGEPVCARFCLG.

Residues 1-20 form the signal peptide; it reads MSRLGIMVLTLLLLVFIVTS. A propeptide spanning residues 21-44 is cleaved from the precursor; that stretch reads HQDAGEKQATQRAAINFRWKRSLT. Intrachain disulfides connect Cys52-Cys64, Cys56-Cys73, and Cys63-Cys77. Leu78 carries the post-translational modification Leucine amide.

This sequence belongs to the conotoxin O3 superfamily. Expressed by the venom duct.

It localises to the secreted. The polypeptide is Conotoxin ArMSGL-0122 (Conus arenatus (Sand-dusted cone)).